Reading from the N-terminus, the 335-residue chain is 2,4-dienoyl-CoA reductase [(3E)-enoyl-CoA-producing], mitochondrial (335 aa).

The transit peptide at Met-1–Gln-34 directs the protein to the mitochondrion. Residues Lys-42 and Lys-49 each carry the N6-acetyllysine; alternate modification. N6-succinyllysine; alternate is present on residues Lys-42 and Lys-49. Gly-66–Leu-71 is an NADP(+) binding site. Residue Thr-69 is modified to Phosphothreonine. N6-succinyllysine is present on Lys-73. Arg-91 is an NADP(+) binding site. Arg-91 contacts substrate. 2 positions are modified to N6-acetyllysine; alternate: Lys-97 and Lys-106. N6-succinyllysine; alternate is present on residues Lys-97 and Lys-106. Asp-117 provides a ligand contact to NADP(+). The substrate site is built by Arg-119 and Phe-149. Tyr-199 functions as the Proton acceptor in the catalytic mechanism. Residues Lys-214 and Pro-240–Ile-243 each bind NADP(+). The residue at position 244 (Lys-244) is an N6-acetyllysine; alternate. At Lys-244 the chain carries N6-succinyllysine; alternate. Substrate is bound at residue Arg-251. At Lys-260 the chain carries N6-acetyllysine; alternate. Position 260 is an N6-succinyllysine; alternate (Lys-260). Position 315 is an N6-acetyllysine (Lys-315). At Lys-319 the chain carries N6-acetyllysine; alternate. The residue at position 319 (Lys-319) is an N6-succinyllysine; alternate.

The protein belongs to the short-chain dehydrogenases/reductases (SDR) family. 2,4-dienoyl-CoA reductase subfamily. In terms of assembly, homotetramer.

The protein resides in the mitochondrion. It catalyses the reaction a (2E,4E)-dienoyl-CoA + NADPH + H(+) = a 4,5-saturated-(3E)-enoyl-CoA + NADP(+). The catalysed reaction is a (2E,4Z)-dienoyl-CoA + NADPH + H(+) = a 4,5-saturated-(3E)-enoyl-CoA + NADP(+). The enzyme catalyses (2E,4E)-hexadienoyl-CoA + NADPH + H(+) = (3E)-hexenoyl-CoA + NADP(+). In terms of biological role, auxiliary enzyme of beta-oxidation. It participates in the metabolism of unsaturated fatty enoyl-CoA esters having double bonds in both even- and odd-numbered positions in mitochondria. Catalyzes the NADP-dependent reduction of 2,4-dienoyl-CoA to yield trans-3-enoyl-CoA. This Mus musculus (Mouse) protein is 2,4-dienoyl-CoA reductase [(3E)-enoyl-CoA-producing], mitochondrial (Decr1).